We begin with the raw amino-acid sequence, 181 residues long: L-fuculose phosphate aldolase (181 aa).

Residues 24-25 (GN), 39-40 (TG), and 66-67 (TS) each bind substrate. The active-site Proton donor/acceptor is the E68. E68, H87, H89, and H147 together coordinate Zn(2+).

This sequence belongs to the aldolase class II family. AraD/FucA subfamily. In terms of assembly, homotetramer. Zn(2+) serves as cofactor.

The enzyme catalyses L-fuculose 1-phosphate = (S)-lactaldehyde + dihydroxyacetone phosphate. It participates in cofactor biosynthesis; coenzyme F420 biosynthesis. Trimethyl phosphonoacetate and DL-threose are competitive inhibitors with respect to dihydroxyacetone phosphate, and uncompetitive inhibitors with respect to DL-glyceraldehyde. Functionally, involved in the biosynthesis of the coenzyme F420 which requires phospholactate produced via the aldol cleavage of L-fuculose 1-phosphate and the NAD(+)-dependent oxidation of (S)-lactaldehyde. Catalyzes the reversible cleavage of L-fuculose 1-phosphate (Fuc1P) to yield dihydroxyacetone phosphate (DHAP) and S-lactaldehyde. FucA possesses a high specificity for the dihydroxyacetone phosphate (DHAP), but accepts a great variety of different aldehydes such as DL-glyceraldehyde and glycolaldehyde. The polypeptide is L-fuculose phosphate aldolase (fucA) (Methanocaldococcus jannaschii (strain ATCC 43067 / DSM 2661 / JAL-1 / JCM 10045 / NBRC 100440) (Methanococcus jannaschii)).